Here is a 579-residue protein sequence, read N- to C-terminus: DBIRD complex subunit ZNF326 (579 aa).

A mediates transcriptional activation region spans residues 1 to 124; the sequence is MDFEDDYTHS…YRNSLDSFGG (124 aa). Phosphoserine is present on residues Ser48, Ser56, Ser63, Ser69, Ser81, Ser82, Ser91, Ser106, Ser114, Ser118, Ser121, and Ser137. A Glycyl lysine isopeptide (Lys-Gly) (interchain with G-Cter in SUMO2) cross-link involves residue Lys140. The disordered stretch occupies residues 154-194; it reads YSSYSSFSSPHMKPAPVGSRGRGTPAYPESTFGSRNYDAFG. At Arg173 the chain carries Omega-N-methylarginine. Ser212 carries the phosphoserine modification. The residue at position 235 (Arg235) is an Omega-N-methylarginine. Positions 238–260 match the Bipartite nuclear localization signal motif; sequence KRKMIQPFNKPGGTFIKKPKLAK. Lys240 participates in a covalent cross-link: Glycyl lysine isopeptide (Lys-Gly) (interchain with G-Cter in SUMO2). Lys247 carries the post-translational modification N6-acetyllysine; alternate. Lys247 participates in a covalent cross-link: Glycyl lysine isopeptide (Lys-Gly) (interchain with G-Cter in SUMO2); alternate. Residues 248–302 form a disordered region; that stretch reads PGGTFIKKPKLAKPVEKMSLSKSPTKTDPKNEEEEKRRIEARREKQRRRREKNSE. Phosphothreonine is present on Thr251. Glycyl lysine isopeptide (Lys-Gly) (interchain with G-Cter in SUMO2) cross-links involve residues Lys254 and Lys264. Position 270 is a phosphoserine (Ser270). A compositionally biased stretch (basic and acidic residues) spans 272 to 290; that stretch reads TKTDPKNEEEEKRRIEARR. A C2H2 AKAP95-type 1 zinc finger spans residues 314-336; it reads CSFCKFRTFEEKDIELHLESASH. A Glycyl lysine isopeptide (Lys-Gly) (interchain with G-Cter in SUMO2) cross-link involves residue Lys401. The C2H2 AKAP95-type 2 zinc finger occupies 407–430; that stretch reads CSACSVYIPALHSSVQQHLKSPDH. Residues Lys459 and Lys467 each participate in a glycyl lysine isopeptide (Lys-Gly) (interchain with G-Cter in SUMO2) cross-link. The interval 470–579 is disordered; it reads NPFEIQDHSQ…GFSVDQAEEN (110 aa). Acidic residues-rich tracts occupy residues 483 to 520, 529 to 541, and 549 to 565; these read IEGD…EEVG, GDTE…EGEG, and GEGE…EEAK.

This sequence belongs to the AKAP95 family. In terms of assembly, component of the DBIRD complex. Interacts with CCAR2; the interaction is direct.

The protein localises to the nucleus matrix. Its function is as follows. Core component of the DBIRD complex, a multiprotein complex that acts at the interface between core mRNP particles and RNA polymerase II (RNAPII) and integrates transcript elongation with the regulation of alternative splicing: the DBIRD complex affects local transcript elongation rates and alternative splicing of a large set of exons embedded in (A + T)-rich DNA regions. May play a role in neuronal differentiation and is able to bind DNA and activate expression in vitro. In Bos taurus (Bovine), this protein is DBIRD complex subunit ZNF326 (ZNF326).